Reading from the N-terminus, the 184-residue chain is Rubrerythrin-2 (184 aa).

One can recognise a Ferritin-like diiron domain in the interval 2–146; that stretch reads SVKNAMTADF…DAQDSAKENK (145 aa). Residues Glu19, Glu52, Glu94, Glu97, Glu128, His131, Cys156, Cys159, Cys171, and Cys174 each coordinate Fe(3+). Positions 151–184 constitute a Rubredoxin-like domain; the sequence is GKVYICPVCGFTTLDENIEQCPICGVKKDKFQAF.

Fe(3+) is required as a cofactor.

The catalysed reaction is H2O2 + NADH + H(+) = NAD(+) + 2 H2O. Its activity is regulated as follows. Rubredoxin (Rd) increases the NADH consumption rate by serving as an intermediary electron-transfer shuttle between NROR and Rbr2. Functions as the terminal component of an NADH peroxidase (NADH:H(2)O(2) oxidoreductase) when using NADH:rubredoxin oxidoreductase (NROR) as the electron transport intermediary from NADH to Rbr2. This is Rubrerythrin-2 (rbr2) from Clostridium acetobutylicum (strain ATCC 824 / DSM 792 / JCM 1419 / IAM 19013 / LMG 5710 / NBRC 13948 / NRRL B-527 / VKM B-1787 / 2291 / W).